The primary structure comprises 876 residues: Alanine--tRNA ligase (876 aa).

At K74 the chain carries N6-acetyllysine. Residues H564, H568, C666, and H670 each coordinate Zn(2+).

The protein belongs to the class-II aminoacyl-tRNA synthetase family. Homotetramer. It depends on Zn(2+) as a cofactor.

The protein resides in the cytoplasm. The catalysed reaction is tRNA(Ala) + L-alanine + ATP = L-alanyl-tRNA(Ala) + AMP + diphosphate. Functionally, catalyzes the attachment of alanine to tRNA(Ala) in a two-step reaction: alanine is first activated by ATP to form Ala-AMP and then transferred to the acceptor end of tRNA(Ala). Also edits incorrectly charged Ser-tRNA(Ala) and Gly-tRNA(Ala) via its editing domain. The protein is Alanine--tRNA ligase of Shigella flexneri serotype 5b (strain 8401).